A 113-amino-acid polypeptide reads, in one-letter code: C-X-C motif chemokine 6 (113 aa).

Positions 1–36 (MSLLPSRAARVPGPSSSLCALLALLLLTPPGPLVSA) are cleaved as a signal peptide. 2 disulfides stabilise this stretch: C48/C74 and C50/C90.

The protein belongs to the intercrine alpha (chemokine CxC) family.

It is found in the secreted. Its function is as follows. Chemotactic for neutrophil granulocytes. Signals through binding and activation of its receptors (CXCR1 and CXCR2). In addition to its chemotactic and angiogenic properties, it has strong antibacterial activity against Gram-positive and Gram-negative bacteria (90-fold-higher when compared to CXCL5 and CXCL7). This chain is C-X-C motif chemokine 6 (CXCL6), found in Equus caballus (Horse).